A 175-amino-acid polypeptide reads, in one-letter code: Co-chaperone protein HscB homolog (175 aa).

A J domain is found at 7–79 (SHFDLFDLPA…LKRATYLLHL (73 aa)).

Belongs to the HscB family. As to quaternary structure, interacts with HscA and stimulates its ATPase activity.

In terms of biological role, co-chaperone involved in the maturation of iron-sulfur cluster-containing proteins. Seems to help targeting proteins to be folded toward HscA. The protein is Co-chaperone protein HscB homolog of Paraburkholderia phytofirmans (strain DSM 17436 / LMG 22146 / PsJN) (Burkholderia phytofirmans).